The primary structure comprises 427 residues: Serine--tRNA ligase (427 aa).

229–231 (TAE) provides a ligand contact to L-serine. 260 to 262 (RSE) contributes to the ATP binding site. L-serine is bound at residue E283. 347–350 (EISS) is an ATP binding site. S383 is a binding site for L-serine.

The protein belongs to the class-II aminoacyl-tRNA synthetase family. Type-1 seryl-tRNA synthetase subfamily. Homodimer. The tRNA molecule binds across the dimer.

The protein resides in the cytoplasm. The enzyme catalyses tRNA(Ser) + L-serine + ATP = L-seryl-tRNA(Ser) + AMP + diphosphate + H(+). It catalyses the reaction tRNA(Sec) + L-serine + ATP = L-seryl-tRNA(Sec) + AMP + diphosphate + H(+). Its pathway is aminoacyl-tRNA biosynthesis; selenocysteinyl-tRNA(Sec) biosynthesis; L-seryl-tRNA(Sec) from L-serine and tRNA(Sec): step 1/1. Catalyzes the attachment of serine to tRNA(Ser). Is also able to aminoacylate tRNA(Sec) with serine, to form the misacylated tRNA L-seryl-tRNA(Sec), which will be further converted into selenocysteinyl-tRNA(Sec). In Oleidesulfovibrio alaskensis (strain ATCC BAA-1058 / DSM 17464 / G20) (Desulfovibrio alaskensis), this protein is Serine--tRNA ligase.